A 294-amino-acid polypeptide reads, in one-letter code: Ribosomal RNA small subunit methyltransferase A (294 aa).

S-adenosyl-L-methionine contacts are provided by asparagine 33, leucine 35, glycine 60, glutamate 81, aspartate 106, and asparagine 131.

Belongs to the class I-like SAM-binding methyltransferase superfamily. rRNA adenine N(6)-methyltransferase family. RsmA subfamily.

The protein localises to the cytoplasm. The enzyme catalyses adenosine(1518)/adenosine(1519) in 16S rRNA + 4 S-adenosyl-L-methionine = N(6)-dimethyladenosine(1518)/N(6)-dimethyladenosine(1519) in 16S rRNA + 4 S-adenosyl-L-homocysteine + 4 H(+). In terms of biological role, specifically dimethylates two adjacent adenosines (A1518 and A1519) in the loop of a conserved hairpin near the 3'-end of 16S rRNA in the 30S particle. May play a critical role in biogenesis of 30S subunits. The polypeptide is Ribosomal RNA small subunit methyltransferase A (Lactococcus lactis subsp. lactis (strain IL1403) (Streptococcus lactis)).